The primary structure comprises 542 residues: Chaperonin GroEL (542 aa).

ATP contacts are provided by residues 29–32, 86–90, glycine 413, 476–478, and aspartate 492; these read TLGP, DGTTT, and NAA. The tract at residues 522–542 is disordered; it reads PDENGPAAVPDMGMGGMGGMM.

It belongs to the chaperonin (HSP60) family. Forms a cylinder of 14 subunits composed of two heptameric rings stacked back-to-back. Interacts with the co-chaperonin GroES.

It is found in the cytoplasm. It catalyses the reaction ATP + H2O + a folded polypeptide = ADP + phosphate + an unfolded polypeptide.. Together with its co-chaperonin GroES, plays an essential role in assisting protein folding. The GroEL-GroES system forms a nano-cage that allows encapsulation of the non-native substrate proteins and provides a physical environment optimized to promote and accelerate protein folding. The chain is Chaperonin GroEL from Listeria monocytogenes serotype 4b (strain CLIP80459).